Consider the following 34-residue polypeptide: NU-buthitoxin-Ptr1a (34 aa).

3 cysteine pairs are disulfide-bonded: cysteine 6/cysteine 27, cysteine 12/cysteine 32, and cysteine 16/cysteine 34.

In terms of tissue distribution, expressed by the venom gland.

It is found in the secreted. Toxin that acts as an agonist on melanocortin receptors (MC1R, MC3R, MC5R, MC5R). After binding to MC1R, the peptide activates the hMC1R/Gs pathway, but after binding to MC4R, it is not able to activate or antagonize the MC4R/Gs pathway. Inhibits melanocyte stimulating hormone (MSH)-binding to human receptors (Ki=2.9 uM to MC1R, Ki=3.9 uM to MC3R, Ki=2.6 uM to MC4R, Ki=2.2 uM to MC5R). This toxin is structurally unrelated to the natural agonists. The sequence is that of NU-buthitoxin-Ptr1a from Parabuthus transvaalicus (Transvaal thick-tailed scorpion).